The sequence spans 145 residues: Eukaryotic translation initiation factor 1A (145 aa).

The segment covering 1–15 has biased composition (basic residues); the sequence is MPKNKGKGGKNRKRG. A disordered region spans residues 1–25; it reads MPKNKGKGGKNRKRGKNEADDDKRE. Positions 16–25 are enriched in basic and acidic residues; sequence KNEADDDKRE. One can recognise an S1-like domain in the interval 22-96; sequence DKRELVFKED…DKADVILKLM (75 aa).

This sequence belongs to the eIF-1A family.

Its function is as follows. Seems to be required for maximal rate of protein biosynthesis. Enhances ribosome dissociation into subunits and stabilizes the binding of the initiator Met-tRNA(I) to 40 S ribosomal subunits. The chain is Eukaryotic translation initiation factor 1A from Onobrychis viciifolia (Common sainfoin).